Here is a 366-residue protein sequence, read N- to C-terminus: Carboxy-cis,cis-muconate cyclase (366 aa).

Residues His-149, Arg-197, Glu-213, and Arg-275 contribute to the active site.

The protein belongs to the cycloisomerase 2 family. As to quaternary structure, homotetramer.

It catalyses the reaction 3-carboxy-2,5-dihydro-5-oxofuran-2-acetate = 3-carboxy-cis,cis-muconate. Its pathway is aromatic compound metabolism; beta-ketoadipate pathway; 3-carboxy-cis,cis-muconate from 3-carboxy-2,5-dihydro-5-oxofuran-2-acetate: step 1/1. Functionally, catalyzes a syn cycloisomerization. Also possesses mle activity. This chain is Carboxy-cis,cis-muconate cyclase, found in Neurospora crassa (strain ATCC 24698 / 74-OR23-1A / CBS 708.71 / DSM 1257 / FGSC 987).